Here is a 406-residue protein sequence, read N- to C-terminus: Ribulose bisphosphate carboxylase large chain (406 aa).

Substrate contacts are provided by Asn-101 and Thr-151. Catalysis depends on Lys-153, which acts as the Proton acceptor. Lys-155 is a substrate binding site. Residues Lys-179, Asp-181, and Glu-182 each coordinate Mg(2+). An N6-carboxylysine modification is found at Lys-179. The active-site Proton acceptor is His-272. Arg-273, His-305, and Ser-357 together coordinate substrate.

This sequence belongs to the RuBisCO large chain family. Type I subfamily. In terms of assembly, heterohexadecamer of 8 large chains and 8 small chains; disulfide-linked. The disulfide link is formed within the large subunit homodimers. Mg(2+) is required as a cofactor. In terms of processing, the disulfide bond which can form in the large chain dimeric partners within the hexadecamer appears to be associated with oxidative stress and protein turnover.

It is found in the plastid. It localises to the chloroplast. It catalyses the reaction 2 (2R)-3-phosphoglycerate + 2 H(+) = D-ribulose 1,5-bisphosphate + CO2 + H2O. The enzyme catalyses D-ribulose 1,5-bisphosphate + O2 = 2-phosphoglycolate + (2R)-3-phosphoglycerate + 2 H(+). Its function is as follows. RuBisCO catalyzes two reactions: the carboxylation of D-ribulose 1,5-bisphosphate, the primary event in carbon dioxide fixation, as well as the oxidative fragmentation of the pentose substrate in the photorespiration process. Both reactions occur simultaneously and in competition at the same active site. This Trichomanes striatum (Fern) protein is Ribulose bisphosphate carboxylase large chain (rbcL).